Here is a 155-residue protein sequence, read N- to C-terminus: DNA gyrase inhibitor (155 aa).

Belongs to the DNA gyrase inhibitor family. As to quaternary structure, interacts with DNA gyrase.

Its subcellular location is the cytoplasm. Its function is as follows. Inhibits the supercoiling activity of DNA gyrase. Acts by inhibiting DNA gyrase at an early step, prior to (or at the step of) binding of DNA by the gyrase. It protects cells against toxins that target DNA gyrase, by inhibiting activity of these toxins and reducing the formation of lethal double-strand breaks in the cell. The sequence is that of DNA gyrase inhibitor from Salmonella arizonae (strain ATCC BAA-731 / CDC346-86 / RSK2980).